Reading from the N-terminus, the 632-residue chain is Chaperone protein DnaK (632 aa).

T198 carries the post-translational modification Phosphothreonine; by autocatalysis. The tract at residues 524 to 557 (RREAVDAKNHADSLVHSTEKALAEHGSKIEDSER) is disordered.

It belongs to the heat shock protein 70 family.

Functionally, acts as a chaperone. In Nitrobacter hamburgensis (strain DSM 10229 / NCIMB 13809 / X14), this protein is Chaperone protein DnaK.